Reading from the N-terminus, the 81-residue chain is ATP synthase subunit c, chloroplastic (81 aa).

The next 2 membrane-spanning stretches (helical) occupy residues 7-27 and 57-77; these read AASVIAAGLAVGLASIGPGIG and LAFMEALTIYGLVVALALLFA.

This sequence belongs to the ATPase C chain family. F-type ATPases have 2 components, F(1) - the catalytic core - and F(0) - the membrane proton channel. F(1) has five subunits: alpha(3), beta(3), gamma(1), delta(1), epsilon(1). F(0) has four main subunits: a(1), b(1), b'(1) and c(10-14). The alpha and beta chains form an alternating ring which encloses part of the gamma chain. F(1) is attached to F(0) by a central stalk formed by the gamma and epsilon chains, while a peripheral stalk is formed by the delta, b and b' chains.

It is found in the plastid. It localises to the chloroplast thylakoid membrane. Its function is as follows. F(1)F(0) ATP synthase produces ATP from ADP in the presence of a proton or sodium gradient. F-type ATPases consist of two structural domains, F(1) containing the extramembraneous catalytic core and F(0) containing the membrane proton channel, linked together by a central stalk and a peripheral stalk. During catalysis, ATP synthesis in the catalytic domain of F(1) is coupled via a rotary mechanism of the central stalk subunits to proton translocation. Functionally, key component of the F(0) channel; it plays a direct role in translocation across the membrane. A homomeric c-ring of between 10-14 subunits forms the central stalk rotor element with the F(1) delta and epsilon subunits. This Pelargonium hortorum (Common geranium) protein is ATP synthase subunit c, chloroplastic.